We begin with the raw amino-acid sequence, 959 residues long: Glycine dehydrogenase (decarboxylating) (959 aa).

K708 carries the post-translational modification N6-(pyridoxal phosphate)lysine.

The protein belongs to the GcvP family. As to quaternary structure, the glycine cleavage system is composed of four proteins: P, T, L and H. Pyridoxal 5'-phosphate is required as a cofactor.

It carries out the reaction N(6)-[(R)-lipoyl]-L-lysyl-[glycine-cleavage complex H protein] + glycine + H(+) = N(6)-[(R)-S(8)-aminomethyldihydrolipoyl]-L-lysyl-[glycine-cleavage complex H protein] + CO2. The glycine cleavage system catalyzes the degradation of glycine. The P protein binds the alpha-amino group of glycine through its pyridoxal phosphate cofactor; CO(2) is released and the remaining methylamine moiety is then transferred to the lipoamide cofactor of the H protein. The chain is Glycine dehydrogenase (decarboxylating) from Yersinia pseudotuberculosis serotype O:1b (strain IP 31758).